Here is a 156-residue protein sequence, read N- to C-terminus: Small ribosomal subunit protein uS7 (156 aa).

This sequence belongs to the universal ribosomal protein uS7 family. As to quaternary structure, part of the 30S ribosomal subunit. Contacts proteins S9 and S11.

One of the primary rRNA binding proteins, it binds directly to 16S rRNA where it nucleates assembly of the head domain of the 30S subunit. Is located at the subunit interface close to the decoding center, probably blocks exit of the E-site tRNA. This chain is Small ribosomal subunit protein uS7, found in Trichormus variabilis (strain ATCC 29413 / PCC 7937) (Anabaena variabilis).